The primary structure comprises 366 residues: tRNA/tmRNA (uracil-C(5))-methyltransferase (366 aa).

Residues Q190, Y218, N223, E239, and D299 each coordinate S-adenosyl-L-methionine. Residue C324 is the Nucleophile of the active site. E358 acts as the Proton acceptor in catalysis.

The protein belongs to the class I-like SAM-binding methyltransferase superfamily. RNA M5U methyltransferase family. TrmA subfamily.

The catalysed reaction is uridine(54) in tRNA + S-adenosyl-L-methionine = 5-methyluridine(54) in tRNA + S-adenosyl-L-homocysteine + H(+). The enzyme catalyses uridine(341) in tmRNA + S-adenosyl-L-methionine = 5-methyluridine(341) in tmRNA + S-adenosyl-L-homocysteine + H(+). Functionally, dual-specificity methyltransferase that catalyzes the formation of 5-methyluridine at position 54 (m5U54) in all tRNAs, and that of position 341 (m5U341) in tmRNA (transfer-mRNA). The chain is tRNA/tmRNA (uracil-C(5))-methyltransferase from Escherichia coli O157:H7.